Consider the following 442-residue polypeptide: Putative nucleotide-sugar transporter YMD8 (442 aa).

Residues 1-3 (MNR) are Cytoplasmic-facing. The helical transmembrane segment at 4-24 (TVFLAFVFGWYFCSIALSIYN) threads the bilayer. The Extracellular portion of the chain corresponds to 25 to 32 (RWMFDPKD). The chain crosses the membrane as a helical span at residues 33–53 (GLGIGYPVLVTTFHQATLWLL). Residues 54–76 (SGIYIKLRHKPVKNVLRKNNGFN) are Cytoplasmic-facing. Residues 77 to 97 (WSFFLKFLLPTAVASAGDIGL) traverse the membrane as a helical segment. Over 98–107 (SNVSFQYVPL) the chain is Extracellular. The N-linked (GlcNAc...) asparagine glycan is linked to N99. Residues 108–128 (TIYTIIKSSSIAFVLLFGCIF) traverse the membrane as a helical segment. At 129–132 (KLEK) the chain is on the cytoplasmic side. Residues 133–153 (FHWKLALSVIIMFVGVALMVF) traverse the membrane as a helical segment. The Extracellular segment spans residues 154–166 (KPSDSTSTKNDQA). The chain crosses the membrane as a helical span at residues 167 to 187 (LVIFGSFLVLASSCLSGLRWV). Residues 188-254 (YTQLMLRNNP…PIHTIHQLAP (67 aa)) lie on the Cytoplasmic side of the membrane. S209 carries the post-translational modification Phosphoserine. The chain crosses the membrane as a helical span at residues 255–275 (IMGITLLLTSLLVEKPFPGIF). The Extracellular portion of the chain corresponds to 276 to 301 (SSSIFRLDTSNGGVGTETTVLSIVRG). Residues 302-322 (IVLLILPGFAVFLLTICEFSI) form a helical membrane-spanning segment. The Cytoplasmic portion of the chain corresponds to 323 to 329 (LEQTPVL). Residues 330-350 (TVSIVGIVKELLTVIFGIIIL) traverse the membrane as a helical segment. Residues 351 to 355 (SERLS) are Extracellular-facing. Residues 356–376 (GFYNWLGMLIIMADVCYYNYF) form a helical membrane-spanning segment. The Cytoplasmic portion of the chain corresponds to 377–442 (RYKQDLLQKY…QNVSRSSQQV (66 aa)).

The protein belongs to the TPT transporter family. SLC35C subfamily.

Its subcellular location is the golgi apparatus membrane. It localises to the cytoplasmic vesicle. The protein localises to the COPI-coated vesicle membrane. The polypeptide is Putative nucleotide-sugar transporter YMD8 (YMD8) (Saccharomyces cerevisiae (strain ATCC 204508 / S288c) (Baker's yeast)).